The primary structure comprises 948 residues: Glycine dehydrogenase (decarboxylating) (948 aa).

An N6-(pyridoxal phosphate)lysine modification is found at K696.

Belongs to the GcvP family. In terms of assembly, the glycine cleavage system is composed of four proteins: P, T, L and H. Pyridoxal 5'-phosphate is required as a cofactor.

The catalysed reaction is N(6)-[(R)-lipoyl]-L-lysyl-[glycine-cleavage complex H protein] + glycine + H(+) = N(6)-[(R)-S(8)-aminomethyldihydrolipoyl]-L-lysyl-[glycine-cleavage complex H protein] + CO2. The glycine cleavage system catalyzes the degradation of glycine. The P protein binds the alpha-amino group of glycine through its pyridoxal phosphate cofactor; CO(2) is released and the remaining methylamine moiety is then transferred to the lipoamide cofactor of the H protein. This Akkermansia muciniphila (strain ATCC BAA-835 / DSM 22959 / JCM 33894 / BCRC 81048 / CCUG 64013 / CIP 107961 / Muc) protein is Glycine dehydrogenase (decarboxylating).